The following is a 190-amino-acid chain: Putative manganese efflux pump MntP (190 aa).

Transmembrane regions (helical) follow at residues 3-23 (PASI…AAVG), 39-59 (IGLI…FIGQ), 65-85 (VANW…LHMI), 106-128 (WLLA…GLAF), 133-155 (IWVA…VMLG), and 157-177 (AIGT…LIIV).

Belongs to the MntP (TC 9.B.29) family.

It is found in the cell inner membrane. In terms of biological role, probably functions as a manganese efflux pump. This chain is Putative manganese efflux pump MntP, found in Pseudomonas fluorescens (strain ATCC BAA-477 / NRRL B-23932 / Pf-5).